The sequence spans 176 residues: Ribosome rescue factor SmrB (176 aa).

The Smr domain maps to 98-173 (LDVHGLNQDQ…RSTAILFLIH (76 aa)).

It belongs to the SmrB family. As to quaternary structure, associates with collided ribosomes, but not with correctly translating polysomes.

In terms of biological role, acts as a ribosome collision sensor. Detects stalled/collided disomes (pairs of ribosomes where the leading ribosome is stalled and a second ribosome has collided with it) and endonucleolytically cleaves mRNA at the 5' boundary of the stalled ribosome. Stalled/collided disomes form a new interface (primarily via the 30S subunits) that binds SmrB. Cleaved mRNA becomes available for tmRNA ligation, leading to ribosomal subunit dissociation and rescue of stalled ribosomes. This chain is Ribosome rescue factor SmrB, found in Buchnera aphidicola subsp. Baizongia pistaciae (strain Bp).